Here is a 75-residue protein sequence, read N- to C-terminus: DNA-directed RNA polymerase subunit omega (75 aa).

The protein belongs to the RNA polymerase subunit omega family. In cyanobacteria the RNAP catalytic core is composed of 2 alpha, 1 beta, 1 beta', 1 gamma and 1 omega subunit. When a sigma factor is associated with the core the holoenzyme is formed, which can initiate transcription.

The enzyme catalyses RNA(n) + a ribonucleoside 5'-triphosphate = RNA(n+1) + diphosphate. Promotes RNA polymerase assembly. Latches the N- and C-terminal regions of the beta' subunit thereby facilitating its interaction with the beta and alpha subunits. The chain is DNA-directed RNA polymerase subunit omega from Prochlorococcus marinus (strain MIT 9313).